The following is a 229-amino-acid chain: Lipoprotein-releasing system ATP-binding protein LolD 1 (229 aa).

The 228-residue stretch at 2–229 folds into the ABC transporter domain; the sequence is LVVSELSKSY…VRRGRFGITA (228 aa). ATP is bound at residue 38–45; it reads GPSGSGKT.

This sequence belongs to the ABC transporter superfamily. Lipoprotein translocase (TC 3.A.1.125) family. In terms of assembly, the complex is composed of two ATP-binding proteins (LolD) and two transmembrane proteins (LolC and LolE).

Its subcellular location is the cell inner membrane. Functionally, part of the ABC transporter complex LolCDE involved in the translocation of mature outer membrane-directed lipoproteins, from the inner membrane to the periplasmic chaperone, LolA. Responsible for the formation of the LolA-lipoprotein complex in an ATP-dependent manner. This chain is Lipoprotein-releasing system ATP-binding protein LolD 1, found in Rhodopirellula baltica (strain DSM 10527 / NCIMB 13988 / SH1).